Reading from the N-terminus, the 346-residue chain is Hexosaminidase D (346 aa).

Glu141 acts as the Proton donor in catalysis.

This sequence belongs to the glycosyl hydrolase 20 family. Homodimer; disulfide-linked.

It is found in the cytoplasm. It localises to the nucleus. Its subcellular location is the extracellular vesicle. The enzyme catalyses Hydrolysis of terminal non-reducing N-acetyl-D-hexosamine residues in N-acetyl-beta-D-hexosaminides.. Inhibited by O-(2-acetamido-2-deoxy-D-glucopyranosylidene)amino N-phenylcarbamate (PUGNAc). Inhibited by galacto-NAG-thiazoline. Functionally, has hexosaminidase activity. Responsible for the cleavage of the monosaccharides N-acetylglucosamine (GlcNAc) and N-acetylgalactosamine (GalNAc) from cellular substrates. Has a preference for galactosaminide over glucosaminide substrates. In Bos taurus (Bovine), this protein is Hexosaminidase D.